The chain runs to 790 residues: Vacuolar protein sorting-associated protein 35B (790 aa).

Belongs to the VPS35 family. In terms of assembly, component of the retromer complex which consists of VPS29 (MAG1), VPS26 (VPS26A or VPS26B), VPS35 (VPS35A or VPS35B or VPS35C), VPS5/17 (SNX1 or SNX2A or SNX2B). Component of a retromer subcomplex consisting of VPS29 (MAG1), VPS26 (VPS26A or VPS26B), VPS35 (VPS35A or VPS35B or VPS35C). In terms of tissue distribution, expressed in siliques and maturing seeds (at protein level).

The protein resides in the cytoplasm. It localises to the endosome membrane. It is found in the prevacuolar compartment membrane. The protein localises to the golgi apparatus. Its subcellular location is the trans-Golgi network membrane. Its function is as follows. Plays a role in vesicular protein sorting. Component of the membrane-associated retromer complex which is essential in endosome-to-Golgi retrograde transport. Also involved in the efficient sorting of seed storage proteins globulin 12S and albumin 2S. The VPS29-VPS26-VPS35 subcomplex may be involved in recycling of specific cargos from endosome to the plasma membrane. The protein is Vacuolar protein sorting-associated protein 35B (VPS35B) of Arabidopsis thaliana (Mouse-ear cress).